Here is a 1088-residue protein sequence, read N- to C-terminus: Platelet-derived growth factor receptor alpha (1088 aa).

The signal sequence occupies residues methionine 1–glutamine 23. Ig-like C2-type domains follow at residues leucine 24–glutamate 112, isoleucine 116–serine 200, glutamate 201–threonine 305, proline 318–serine 409, and proline 413–valine 516. At leucine 24 to alanine 527 the chain is on the extracellular side. An intrachain disulfide couples cysteine 48 to cysteine 99. Residues asparagine 75, asparagine 102, and asparagine 178 are each glycosylated (N-linked (GlcNAc...) asparagine). Intrachain disulfides connect cysteine 149–cysteine 188 and cysteine 234–cysteine 289. Asparagine 352, asparagine 358, asparagine 457, and asparagine 467 each carry an N-linked (GlcNAc...) asparagine glycan. The cysteines at positions 434 and 500 are disulfide-linked. The chain crosses the membrane as a helical span at residues alanine 528–tryptophan 548. At lysine 549–leucine 1088 the chain is on the cytoplasmic side. 2 positions are modified to phosphotyrosine; by autocatalysis: tyrosine 571 and tyrosine 573. The region spanning leucine 592–leucine 953 is the Protein kinase domain. ATP contacts are provided by residues leucine 598–valine 606 and lysine 626. Residues tyrosine 719, tyrosine 730, tyrosine 741, tyrosine 753, tyrosine 761, and tyrosine 767 each carry the phosphotyrosine; by autocatalysis modification. Aspartate 817 functions as the Proton acceptor in the catalytic mechanism. 3 positions are modified to phosphotyrosine; by autocatalysis: tyrosine 848, tyrosine 987, and tyrosine 1017. Residues tyrosine 1017–leucine 1088 form a disordered region. Polar residues predominate over residues serine 1040 to phenylalanine 1058. A compositionally biased stretch (acidic residues) spans glutamate 1064 to leucine 1088.

Belongs to the protein kinase superfamily. Tyr protein kinase family. CSF-1/PDGF receptor subfamily. As to quaternary structure, interacts with homodimeric PDGFA, PDGFB and PDGFC, and with heterodimers formed by PDGFA and PDGFB. Monomer in the absence of bound ligand. Interaction with dimeric PDGFA, PDGFB and/or PDGFC leads to receptor dimerization, where both PDGFRA homodimers and heterodimers with PDGFRB are observed. Interacts (tyrosine phosphorylated) with SHB (via SH2 domain). Interacts (tyrosine phosphorylated) with SHF (via SH2 domain). Interacts (tyrosine phosphorylated) with SRC (via SH2 domain). Interacts (tyrosine phosphorylated) with PIK3R1. Interacts (tyrosine phosphorylated) with PLCG1 (via SH2 domain). Interacts (tyrosine phosphorylated) with CRK, GRB2 and GRB7. Interacts with CD248; this interaction promotes PDGF receptor signaling pathway. In terms of processing, ubiquitinated, leading to its internalization and degradation. Post-translationally, autophosphorylated on tyrosine residues upon ligand binding. Autophosphorylation occurs in trans, i.e. one subunit of the dimeric receptor phosphorylates tyrosine residues on the other subunit. Phosphorylation at Tyr-730 and Tyr-741 is important for interaction with PIK3R1. Phosphorylation at Tyr-719 and Tyr-753 is important for interaction with PTPN11. Phosphorylation at Tyr-761 is important for interaction with CRK. Phosphorylation at Tyr-571 and Tyr-573 is important for interaction with SRC and SRC family members. Phosphorylation at Tyr-987 and Tyr-1017 is important for interaction with PLCG1.

It localises to the cell membrane. It is found in the cell projection. The protein localises to the cilium. The protein resides in the golgi apparatus. The catalysed reaction is L-tyrosyl-[protein] + ATP = O-phospho-L-tyrosyl-[protein] + ADP + H(+). Present in an inactive conformation in the absence of bound ligand. Binding of PDGFA and/or PDGFB leads to dimerization and activation by autophosphorylation on tyrosine residues. Inhibited by imatinib, nilotinib and sorafenib. In terms of biological role, tyrosine-protein kinase that acts as a cell-surface receptor for PDGFA, PDGFB and PDGFC and plays an essential role in the regulation of embryonic development, cell proliferation, survival and chemotaxis. Depending on the context, promotes or inhibits cell proliferation and cell migration. Plays an important role in the differentiation of bone marrow-derived mesenchymal stem cells. Required for normal skeleton development and cephalic closure during embryonic development. Required for normal development of the mucosa lining the gastrointestinal tract, and for recruitment of mesenchymal cells and normal development of intestinal villi. Plays a role in cell migration and chemotaxis in wound healing. Plays a role in platelet activation, secretion of agonists from platelet granules, and in thrombin-induced platelet aggregation. Binding of its cognate ligands - homodimeric PDGFA, homodimeric PDGFB, heterodimers formed by PDGFA and PDGFB or homodimeric PDGFC -leads to the activation of several signaling cascades; the response depends on the nature of the bound ligand and is modulated by the formation of heterodimers between PDGFRA and PDGFRB. Phosphorylates PIK3R1, PLCG1, and PTPN11. Activation of PLCG1 leads to the production of the cellular signaling molecules diacylglycerol and inositol 1,4,5-trisphosphate, mobilization of cytosolic Ca(2+) and the activation of protein kinase C. Phosphorylates PIK3R1, the regulatory subunit of phosphatidylinositol 3-kinase, and thereby mediates activation of the AKT1 signaling pathway. Mediates activation of HRAS and of the MAP kinases MAPK1/ERK2 and/or MAPK3/ERK1. Promotes activation of STAT family members STAT1, STAT3 and STAT5A and/or STAT5B. Receptor signaling is down-regulated by protein phosphatases that dephosphorylate the receptor and its down-stream effectors, and by rapid internalization of the activated receptor. The sequence is that of Platelet-derived growth factor receptor alpha (Pdgfra) from Rattus norvegicus (Rat).